The sequence spans 365 residues: 2-aminoethylphosphonate--pyruvate transaminase (365 aa).

K194 is modified (N6-(pyridoxal phosphate)lysine).

Belongs to the class-V pyridoxal-phosphate-dependent aminotransferase family. PhnW subfamily. Homodimer. Pyridoxal 5'-phosphate serves as cofactor.

The catalysed reaction is (2-aminoethyl)phosphonate + pyruvate = phosphonoacetaldehyde + L-alanine. Its function is as follows. Involved in phosphonate degradation. The chain is 2-aminoethylphosphonate--pyruvate transaminase from Bacillus cereus (strain ZK / E33L).